The sequence spans 160 residues: Small ribosomal subunit protein uS19 (160 aa).

Residues 1 to 27 form a disordered region; sequence MARQKFSGKGGKGKSKKGQQSTAPRRR.

The protein belongs to the universal ribosomal protein uS19 family.

Its function is as follows. Protein S19 forms a complex with S13 that binds strongly to the 16S ribosomal RNA. In Methanococcus vannielii (strain ATCC 35089 / DSM 1224 / JCM 13029 / OCM 148 / SB), this protein is Small ribosomal subunit protein uS19.